The following is a 476-amino-acid chain: Nyctalopin (476 aa).

The first 18 residues, 1-18 (MLILLLHAVVFSLPYTRA), serve as a signal peptide directing secretion. The LRRNT domain maps to 19-57 (TEACLRACPAACTCSHVERGCSVRCDRAGLQRVPQEFPC). LRR repeat units lie at residues 58–79 (EAASIDLDRNGLRILGERAFGT), 82–103 (SLRRLSLRHNNLSFITPGAFKG), 106–128 (RLAELRLAHNGELRYLHVRTFAA), 131–154 (RLRRLDLAACRLFSVPERLLAELP), 155–177 (ALRELTAFDNLFRRVPGALRGLA), 178–199 (NLTHAHFERSRIEAVASGSLLG), 202–223 (RLRSLSLQANRVRAVHAGAFGD), 226–247 (ALEDLLLNDNLLATLPAAAFRG), 250–271 (RLRTLNLGGNALGSVARAWFSD), 274–295 (ELELLYLDRNSITFVEEGAFQN), and 298–319 (GLLALHLNGNRLTVLSWAAFQP). The N-linked (GlcNAc...) asparagine glycan is linked to Asn92. An N-linked (GlcNAc...) asparagine glycan is attached at Asn178. The N-linked (GlcNAc...) asparagine glycan is linked to Asn295. The 53-residue stretch at 331–383 (NPWRCDCQLEWLRDWMEGSGRVADVACASPGSVAGQDLSQVVFERSSDGLCVD) folds into the LRRCT domain. N-linked (GlcNAc...) asparagine glycosylation is found at Asn388, Asn427, Asn434, and Asn438.

Belongs to the small leucine-rich proteoglycan (SLRP) family. SLRP class IV subfamily. As to expression, expressed abundantly in retina with lower levels in brain, lung, spleen and testis. Not detected in kidney, heart or liver. In the retina, highest expression found in the inner nuclear layer and ganglion cell layer.

Its subcellular location is the secreted. The protein resides in the extracellular space. It is found in the extracellular matrix. The polypeptide is Nyctalopin (Nyx) (Mus musculus (Mouse)).